A 246-amino-acid polypeptide reads, in one-letter code: Phosphonates import ATP-binding protein PhnC (246 aa).

The ABC transporter domain occupies 2–246 (IKFENVSKVY…ILDEVYRKEG (245 aa)). 35–42 (GTSGAGKS) contributes to the ATP binding site.

The protein belongs to the ABC transporter superfamily. Phosphonates importer (TC 3.A.1.9.1) family. In terms of assembly, the complex is composed of two ATP-binding proteins (PhnC), two transmembrane proteins (PhnE) and a solute-binding protein (PhnD).

It is found in the cell membrane. The enzyme catalyses phosphonate(out) + ATP + H2O = phosphonate(in) + ADP + phosphate + H(+). Functionally, part of the ABC transporter complex PhnCDE involved in phosphonates import. Responsible for energy coupling to the transport system. The polypeptide is Phosphonates import ATP-binding protein PhnC (Lactococcus lactis subsp. cremoris (strain SK11)).